A 474-amino-acid polypeptide reads, in one-letter code: Bifunctional protein HldE (474 aa).

The segment at 1 to 318 (MKLSMPRFDQ…RAIQREEGSE (318 aa)) is ribokinase. Position 194-197 (194-197 (NLSE)) interacts with ATP. Aspartate 263 is an active-site residue. Residues 343–474 (FTNGCFDILH…AIVEKIRGQG (132 aa)) are cytidylyltransferase.

This sequence in the N-terminal section; belongs to the carbohydrate kinase PfkB family. In the C-terminal section; belongs to the cytidylyltransferase family. As to quaternary structure, homodimer.

It catalyses the reaction D-glycero-beta-D-manno-heptose 7-phosphate + ATP = D-glycero-beta-D-manno-heptose 1,7-bisphosphate + ADP + H(+). The enzyme catalyses D-glycero-beta-D-manno-heptose 1-phosphate + ATP + H(+) = ADP-D-glycero-beta-D-manno-heptose + diphosphate. It functions in the pathway nucleotide-sugar biosynthesis; ADP-L-glycero-beta-D-manno-heptose biosynthesis; ADP-L-glycero-beta-D-manno-heptose from D-glycero-beta-D-manno-heptose 7-phosphate: step 1/4. The protein operates within nucleotide-sugar biosynthesis; ADP-L-glycero-beta-D-manno-heptose biosynthesis; ADP-L-glycero-beta-D-manno-heptose from D-glycero-beta-D-manno-heptose 7-phosphate: step 3/4. Its function is as follows. Catalyzes the phosphorylation of D-glycero-D-manno-heptose 7-phosphate at the C-1 position to selectively form D-glycero-beta-D-manno-heptose-1,7-bisphosphate. In terms of biological role, catalyzes the ADP transfer from ATP to D-glycero-beta-D-manno-heptose 1-phosphate, yielding ADP-D-glycero-beta-D-manno-heptose. The polypeptide is Bifunctional protein HldE (Pseudomonas syringae pv. syringae (strain B728a)).